A 158-amino-acid polypeptide reads, in one-letter code: Transcriptional regulatory protein DoeX (158 aa).

The region spanning 3 to 64 (LDRYDLKILE…RLNTDVLVKR (62 aa)) is the HTH asnC-type domain. A DNA-binding region (H-T-H motif) is located at residues 22–41 (KSKLAEAINLSVSPCWERVR).

It localises to the cytoplasm. Functionally, acts as a transcriptional regulator. It binds DNA specifically to a fragment from the doeA promoter region. The sequence is that of Transcriptional regulatory protein DoeX (doeX) from Halomonas elongata (strain ATCC 33173 / DSM 2581 / NBRC 15536 / NCIMB 2198 / 1H9).